We begin with the raw amino-acid sequence, 142 residues long: ATP synthase epsilon chain (142 aa).

It belongs to the ATPase epsilon chain family. F-type ATPases have 2 components, CF(1) - the catalytic core - and CF(0) - the membrane proton channel. CF(1) has five subunits: alpha(3), beta(3), gamma(1), delta(1), epsilon(1). CF(0) has three main subunits: a, b and c.

The protein resides in the cell inner membrane. Functionally, produces ATP from ADP in the presence of a proton gradient across the membrane. The polypeptide is ATP synthase epsilon chain (Shewanella sediminis (strain HAW-EB3)).